The chain runs to 213 residues: Pyridoxine/pyridoxamine 5'-phosphate oxidase (213 aa).

Substrate contacts are provided by residues arginine 8–tyrosine 11 and lysine 66. FMN-binding positions include arginine 61 to lysine 66, tyrosine 76 to threonine 77, arginine 82, lysine 83, and glutamine 105. Residues tyrosine 123, arginine 127, and serine 131 each coordinate substrate. FMN contacts are provided by residues glutamine 140–serine 141 and tryptophan 185. Arginine 191–histidine 193 contacts substrate. Arginine 195 provides a ligand contact to FMN.

It belongs to the pyridoxamine 5'-phosphate oxidase family. As to quaternary structure, homodimer. Requires FMN as cofactor.

It carries out the reaction pyridoxamine 5'-phosphate + O2 + H2O = pyridoxal 5'-phosphate + H2O2 + NH4(+). It catalyses the reaction pyridoxine 5'-phosphate + O2 = pyridoxal 5'-phosphate + H2O2. Its pathway is cofactor metabolism; pyridoxal 5'-phosphate salvage; pyridoxal 5'-phosphate from pyridoxamine 5'-phosphate: step 1/1. It participates in cofactor metabolism; pyridoxal 5'-phosphate salvage; pyridoxal 5'-phosphate from pyridoxine 5'-phosphate: step 1/1. Catalyzes the oxidation of either pyridoxine 5'-phosphate (PNP) or pyridoxamine 5'-phosphate (PMP) into pyridoxal 5'-phosphate (PLP). The sequence is that of Pyridoxine/pyridoxamine 5'-phosphate oxidase from Bacteroides thetaiotaomicron (strain ATCC 29148 / DSM 2079 / JCM 5827 / CCUG 10774 / NCTC 10582 / VPI-5482 / E50).